The following is a 1087-amino-acid chain: Exportin-7 (1087 aa).

Alanine 2 carries the N-acetylalanine modification. Residues 30-96 (AEKALVEFTN…RNYVLNYLAT (67 aa)) form the Importin N-terminal domain. At serine 570 the chain carries Phosphoserine.

The protein belongs to the exportin family. In terms of assembly, binds to nucleoporins. Found in a complex with XPO7, EIF4A1, ARHGAP1, VPS26A, VPS29, VPS35 and SFN. Interacts with ARHGAP1 and SFN. Interacts with Ran and cargo proteins in a GTP-dependent manner. As to expression, highly expressed in testis and spleen, moderate in kidney and liver and low in heart, brain, lung and skeletal muscle.

The protein localises to the cytoplasm. Its subcellular location is the nucleus. In terms of biological role, mediates the nuclear export of proteins (cargos) with broad substrate specificity. In the nucleus binds cooperatively to its cargo and to the GTPase Ran in its active GTP-bound form. Docking of this trimeric complex to the nuclear pore complex (NPC) is mediated through binding to nucleoporins. Upon transit of a nuclear export complex into the cytoplasm, disassembling of the complex and hydrolysis of Ran-GTP to Ran-GDP (induced by RANBP1 and RANGAP1, respectively) cause release of the cargo from the export receptor. XPO7 then return to the nuclear compartment and mediate another round of transport. The directionality of nuclear export is thought to be conferred by an asymmetric distribution of the GTP- and GDP-bound forms of Ran between the cytoplasm and nucleus. The polypeptide is Exportin-7 (Xpo7) (Mus musculus (Mouse)).